Reading from the N-terminus, the 595-residue chain is MTTSDPNPKPIVEDAQPEQITATEELAGLLENPTNLEGKLADAEEEIILEGEDTQASLNWSVIVPALVIVLATVVWGIGFKDSFTNFASSALSAVVDNLGWAFILFGTVFVFFIVVIAASKFGTIRLGRIDEAPEFRTVSWISMMFAAGMGIGLMFYGTTEPLTFYRNGVPGHDEHNVGVAMSTTMFHWTLHPWAIYAIVGLAIAYSTFRVGRKQLLSSAFVPLIGEKGAEGWLGKLIDILAIIATVFGTACSLGLGALQIGAGLSAANIIEDPSDWTIVGIVSVLTLAFIFSAISGVGKGIQYLSNANMVLAALLAIFVFVVGPTVSILNLLPGSIGNYLSNFFQMAGRTAMSADGTAGEWLGSWTIFYWAWWISWSPFVGMFLARISRGRSIREFILGVLLVPAGVSTVWFSIFGGTAIVFEQNGESIWGDGAAEEQLFGLLHALPGGQIMGIIAMILLGTFFITSADSASTVMGTMSQHGQLEANKWVTAAWGVATAAIGLTLLLSGGDNALSNLQNVTIVAATPFLFVVIGLMFALVKDLSNDVIYLEYREQQRFNARLARERRVHNEHRKRELAAKRRRERKASGAGKRR.

At 1–59 the chain is on the cytoplasmic side; it reads MTTSDPNPKPIVEDAQPEQITATEELAGLLENPTNLEGKLADAEEEIILEGEDTQASLN. A helical membrane pass occupies residues 60–80; the sequence is WSVIVPALVIVLATVVWGIGF. Over 81–98 the chain is Periplasmic; sequence KDSFTNFASSALSAVVDN. A helical transmembrane segment spans residues 99 to 119; sequence LGWAFILFGTVFVFFIVVIAA. Residues 120–137 are Cytoplasmic-facing; the sequence is SKFGTIRLGRIDEAPEFR. The helical transmembrane segment at 138–158 threads the bilayer; it reads TVSWISMMFAAGMGIGLMFYG. Na(+) contacts are provided by Ala-147, Ala-148, and Met-150. Residue 152-153 coordinates glycine betaine; the sequence is IG. At 159–185 the chain is on the periplasmic side; the sequence is TTEPLTFYRNGVPGHDEHNVGVAMSTT. The helical transmembrane segment at 186–206 threads the bilayer; the sequence is MFHWTLHPWAIYAIVGLAIAY. Residues 207 to 236 lie on the Cytoplasmic side of the membrane; sequence STFRVGRKQLLSSAFVPLIGEKGAEGWLGK. Residues 237–257 form a helical membrane-spanning segment; it reads LIDILAIIATVFGTACSLGLG. Position 253 (Ser-253) interacts with glycine betaine. Residues 258-276 are Periplasmic-facing; the sequence is ALQIGAGLSAANIIEDPSD. The chain crosses the membrane as a helical span at residues 277–296; it reads WTIVGIVSVLTLAFIFSAIS. Over 297-299 the chain is Cytoplasmic; that stretch reads GVG. The chain crosses the membrane as a helical span at residues 300–323; that stretch reads KGIQYLSNANMVLAALLAIFVFVV. Na(+) is bound by residues Ser-306 and Met-310. Residues 324-365 lie on the Periplasmic side of the membrane; sequence GPTVSILNLLPGSIGNYLSNFFQMAGRTAMSADGTAGEWLGS. Residues 366–386 form a helical membrane-spanning segment; it reads WTIFYWAWWISWSPFVGMFLA. Residue 373-377 participates in glycine betaine binding; sequence WWISW. At 387-396 the chain is on the cytoplasmic side; the sequence is RISRGRSIRE. Residues 397–417 form a helical membrane-spanning segment; that stretch reads FILGVLLVPAGVSTVWFSIFG. Over 418 to 451 the chain is Periplasmic; the sequence is GTAIVFEQNGESIWGDGAAEEQLFGLLHALPGGQ. The chain crosses the membrane as a helical span at residues 452–476; it reads IMGIIAMILLGTFFITSADSASTVM. The Cytoplasmic portion of the chain corresponds to 477 to 489; the sequence is GTMSQHGQLEANK. Residues 490-510 form a helical membrane-spanning segment; it reads WVTAAWGVATAAIGLTLLLSG. Residues 511-520 lie on the Periplasmic side of the membrane; that stretch reads GDNALSNLQN. Residues 521 to 541 traverse the membrane as a helical segment; the sequence is VTIVAATPFLFVVIGLMFALV. At 542–595 the chain is on the cytoplasmic side; sequence KDLSNDVIYLEYREQQRFNARLARERRVHNEHRKRELAAKRRRERKASGAGKRR. The tract at residues 570 to 595 is disordered; that stretch reads HNEHRKRELAAKRRRERKASGAGKRR. Over residues 581 to 595 the composition is skewed to basic residues; it reads KRRRERKASGAGKRR.

It belongs to the BCCT transporter (TC 2.A.15) family. Homotrimer. The monomer can accumulate glycine betaine, but trimerization is required to properly respond to osmotic stress.

The protein localises to the cell inner membrane. Its activity is regulated as follows. Uptake is activated by hyperosmotic stress. Osmoresponsive activation is triggered by a change in the internal K(+) concentration. In addition, shows a pronounced chill stimulation, at temperatures around 10 degrees Celsius. Chill activation may be influenced by the membrane lipid composition. Uptake is completely abolished by the uncoupler CCCP, and to a different extent by the ionophores valinomycin and nigericin. Functionally, involved in response to osmotic stress. High-affinity glycine betaine-specific uptake system, which couples the uptake of glycine betaine to the symport of two Na(+) ions. Transport is driven both by the Na(+) gradient and by the electrical potential. In addition, functions both as an osmosensor and as an osmoregulator that transduces signal to the catalytic part of the carrier protein, which adapts its activity to the extent of osmotic stress. The protein is Glycine betaine transporter BetP of Corynebacterium glutamicum (strain ATCC 13032 / DSM 20300 / JCM 1318 / BCRC 11384 / CCUG 27702 / LMG 3730 / NBRC 12168 / NCIMB 10025 / NRRL B-2784 / 534).